A 328-amino-acid polypeptide reads, in one-letter code: Octanoyltransferase, mitochondrial (328 aa).

Positions 108-312 (MKPNPIILTF…EMTKLLGIKT (205 aa)) constitute a BPL/LPL catalytic domain. Substrate is bound by residues 162 to 169 (RGGQVTFH), 241 to 243 (SVG), and 254 to 256 (GVA). Cys272 serves as the catalytic Acyl-thioester intermediate.

The protein belongs to the LipB family.

The protein resides in the mitochondrion. The catalysed reaction is octanoyl-[ACP] + L-lysyl-[protein] = N(6)-octanoyl-L-lysyl-[protein] + holo-[ACP] + H(+). It functions in the pathway protein modification; protein lipoylation via endogenous pathway; protein N(6)-(lipoyl)lysine from octanoyl-[acyl-carrier-protein]: step 1/2. Functionally, catalyzes the transfer of endogenously produced octanoic acid from octanoyl-acyl-carrier-protein onto the lipoyl domains of lipoate-dependent enzymes. Lipoyl-ACP can also act as a substrate although octanoyl-ACP is likely to be the physiological substrate. The sequence is that of Octanoyltransferase, mitochondrial (LIP2) from Saccharomyces cerevisiae (strain ATCC 204508 / S288c) (Baker's yeast).